Reading from the N-terminus, the 294-residue chain is Small ribosomal subunit protein uS2 (294 aa).

This sequence belongs to the universal ribosomal protein uS2 family.

The polypeptide is Small ribosomal subunit protein uS2 (rpsB) (Mycoplasma pneumoniae (strain ATCC 29342 / M129 / Subtype 1) (Mycoplasmoides pneumoniae)).